A 282-amino-acid polypeptide reads, in one-letter code: tRNA (guanine-N(7)-)-methyltransferase (282 aa).

Residues 1 to 31 (MSLTDDQASKRQAYRAAKEANRKELKHVKID) form a disordered region. Residues 16–31 (AAKEANRKELKHVKID) show a composition bias toward basic and acidic residues. S-adenosyl-L-methionine contacts are provided by residues Gly-99, 122–123 (EI), 157–158 (NA), and Cys-177. Asp-180 is an active-site residue. 255 to 257 (TEE) lines the S-adenosyl-L-methionine pocket.

This sequence belongs to the class I-like SAM-binding methyltransferase superfamily. TrmB family. As to quaternary structure, forms a complex with TRM82.

The protein localises to the nucleus. It catalyses the reaction guanosine(46) in tRNA + S-adenosyl-L-methionine = N(7)-methylguanosine(46) in tRNA + S-adenosyl-L-homocysteine. Its pathway is tRNA modification; N(7)-methylguanine-tRNA biosynthesis. In terms of biological role, catalyzes the formation of N(7)-methylguanine at position 46 (m7G46) in tRNA. This chain is tRNA (guanine-N(7)-)-methyltransferase, found in Eremothecium gossypii (strain ATCC 10895 / CBS 109.51 / FGSC 9923 / NRRL Y-1056) (Yeast).